The primary structure comprises 407 residues: E3 ubiquitin-protein ligase TRIM13 (407 aa).

The RING-type zinc-finger motif lies at 10–58 (CPICCSLFDDPRVLPCSHNFCKKCLEGILEGSVRNSLWRPAPFKCPTCR). The B box-type zinc finger occupies 89 to 131 (PKMPVCKGHLGQPLNIFCLTDMQLICGICATRGEHTKHVFCSI). Positions 94, 97, 117, and 123 each coordinate Zn(2+). Positions 172-200 (LQLLTKDSDKVKEFFEKLQHTLDQKKNEI) form a coiled coil. The helical transmembrane segment at 317–337 (LFLLILLLGLVIVFGPTMFLE) threads the bilayer.

Belongs to the TRIM/RBCC family. Interacts (via C-terminal domain) with VCP. Interacts with AKT1; the interaction ubiquitinates AKT1 and leads to its proteasomal degradation. Interacts with MDM2; the interaction ubiquitinates AKT1 and leads to its proteasomal degradation. Interacts with p62/SQSTM1. Interacts with TRAF6. Interacts with IKBKG/NEMO. Post-translationally, auto-ubiquitinated; requires the RING-type zinc finger. Auto-polyubiquitination leads to proteasomal degradation.

It is found in the endoplasmic reticulum membrane. It carries out the reaction S-ubiquitinyl-[E2 ubiquitin-conjugating enzyme]-L-cysteine + [acceptor protein]-L-lysine = [E2 ubiquitin-conjugating enzyme]-L-cysteine + N(6)-ubiquitinyl-[acceptor protein]-L-lysine.. It participates in protein modification; protein ubiquitination. Functionally, endoplasmic reticulum (ER) membrane anchored E3 ligase involved in the retrotranslocation and turnover of membrane and secretory proteins from the ER through a set of processes named ER-associated degradation (ERAD). This process acts on misfolded proteins as well as in the regulated degradation of correctly folded proteins. Enhances ionizing radiation-induced p53/TP53 stability and apoptosis via ubiquitinating MDM2 and AKT1 and decreasing AKT1 kinase activity through MDM2 and AKT1 proteasomal degradation. Regulates ER stress-induced autophagy, and may act as a tumor suppressor. Also plays a role in innate immune response by stimulating NF-kappa-B activity in the TLR2 signaling pathway. Ubiquitinates TRAF6 via the 'Lys-29'-linked polyubiquitination chain resulting in NF-kappa-B activation. Participates as well in T-cell receptor-mediated NF-kappa-B activation. In the presence of TNF, modulates the IKK complex by regulating IKBKG/NEMO ubiquitination leading to the repression of NF-kappa-B. The protein is E3 ubiquitin-protein ligase TRIM13 (TRIM13) of Homo sapiens (Human).